The primary structure comprises 152 residues: SsrA-binding protein (152 aa).

This sequence belongs to the SmpB family.

It localises to the cytoplasm. Required for rescue of stalled ribosomes mediated by trans-translation. Binds to transfer-messenger RNA (tmRNA), required for stable association of tmRNA with ribosomes. tmRNA and SmpB together mimic tRNA shape, replacing the anticodon stem-loop with SmpB. tmRNA is encoded by the ssrA gene; the 2 termini fold to resemble tRNA(Ala) and it encodes a 'tag peptide', a short internal open reading frame. During trans-translation Ala-aminoacylated tmRNA acts like a tRNA, entering the A-site of stalled ribosomes, displacing the stalled mRNA. The ribosome then switches to translate the ORF on the tmRNA; the nascent peptide is terminated with the 'tag peptide' encoded by the tmRNA and targeted for degradation. The ribosome is freed to recommence translation, which seems to be the essential function of trans-translation. This is SsrA-binding protein from Rickettsia canadensis (strain McKiel).